Reading from the N-terminus, the 276-residue chain is MDAGDASRLGESLDAVSAAFQSRVMELQELVLARNMYPATAIPDLAAVDVSLTAMEAQLQAVRRRLQEEREAFPKAKKLVQQSLKQQRRLQLMLANMPTGMREDVFATPLEHNSSMMFPESLNFSSAVPEVRDHDLKIKEEPTAPPKKGRGPAPRWYISTEELDSLSSYMRGRLTLEKVNIAINEVASYADGNAHLVACPKKKLSEDTWEKALVLRDIAARESVKGKHFFLETDIKGPGLKLDTTGKAILTVLRHLGRFQETRIGHHRVFILSKQQ.

Residues 48 to 78 (VDVSLTAMEAQLQAVRRRLQEEREAFPKAKK) adopt a coiled-coil conformation.

Belongs to the SKA1 family.

This chain is SKA complex subunit 1 homolog, found in Oryza sativa subsp. indica (Rice).